The sequence spans 360 residues: S-adenosylmethionine:tRNA ribosyltransferase-isomerase (360 aa).

This sequence belongs to the QueA family. Monomer.

The protein localises to the cytoplasm. The enzyme catalyses 7-aminomethyl-7-carbaguanosine(34) in tRNA + S-adenosyl-L-methionine = epoxyqueuosine(34) in tRNA + adenine + L-methionine + 2 H(+). It functions in the pathway tRNA modification; tRNA-queuosine biosynthesis. Functionally, transfers and isomerizes the ribose moiety from AdoMet to the 7-aminomethyl group of 7-deazaguanine (preQ1-tRNA) to give epoxyqueuosine (oQ-tRNA). The protein is S-adenosylmethionine:tRNA ribosyltransferase-isomerase of Burkholderia pseudomallei (strain K96243).